The sequence spans 295 residues: 5'-adenylylsulfate reductase-like 6 (295 aa).

An N-terminal signal peptide occupies residues M1 to A22. The Thioredoxin domain occupies T23–G161. N136 carries N-linked (GlcNAc...) asparagine glycosylation. Residues A208 to V228 traverse the membrane as a helical segment.

Its subcellular location is the membrane. The chain is 5'-adenylylsulfate reductase-like 6 (APRL6) from Arabidopsis thaliana (Mouse-ear cress).